The sequence spans 668 residues: Threonine--tRNA ligase (668 aa).

A TGS domain is found at 1–64 (MSQAISLTFP…TDGKIEIITR (64 aa)). The segment at 245–553 (DHRKLGREMD…LIENFAGHMP (309 aa)) is catalytic. 3 residues coordinate Zn(2+): Cys-347, His-398, and His-530.

This sequence belongs to the class-II aminoacyl-tRNA synthetase family. In terms of assembly, homodimer. Zn(2+) serves as cofactor.

The protein resides in the cytoplasm. It carries out the reaction tRNA(Thr) + L-threonine + ATP = L-threonyl-tRNA(Thr) + AMP + diphosphate + H(+). Functionally, catalyzes the attachment of threonine to tRNA(Thr) in a two-step reaction: L-threonine is first activated by ATP to form Thr-AMP and then transferred to the acceptor end of tRNA(Thr). Also edits incorrectly charged L-seryl-tRNA(Thr). The chain is Threonine--tRNA ligase from Rhizobium etli (strain CIAT 652).